Here is a 96-residue protein sequence, read N- to C-terminus: UPF0235 protein YPN_3141 (96 aa).

The protein belongs to the UPF0235 family.

The polypeptide is UPF0235 protein YPN_3141 (Yersinia pestis bv. Antiqua (strain Nepal516)).